An 81-amino-acid chain; its full sequence is UPF0180 protein BLi01634/BL05144 (81 aa).

This sequence belongs to the UPF0180 family.

In Bacillus licheniformis (strain ATCC 14580 / DSM 13 / JCM 2505 / CCUG 7422 / NBRC 12200 / NCIMB 9375 / NCTC 10341 / NRRL NRS-1264 / Gibson 46), this protein is UPF0180 protein BLi01634/BL05144.